The sequence spans 497 residues: Phenylalanine--tRNA ligase alpha subunit (497 aa).

L-phenylalanine is bound by residues Thr-329, 372–374 (QIE), and Tyr-412. Residue Glu-414 participates in Mg(2+) binding. Residue Phe-438 participates in L-phenylalanine binding.

This sequence belongs to the class-II aminoacyl-tRNA synthetase family. Phe-tRNA synthetase alpha subunit type 2 subfamily. As to quaternary structure, heterotetramer; dimer of two heterodimers formed by alpha and beta subunits. The cofactor is Mg(2+).

It localises to the cytoplasm. The catalysed reaction is tRNA(Phe) + L-phenylalanine + ATP = L-phenylalanyl-tRNA(Phe) + AMP + diphosphate + H(+). The protein is Phenylalanine--tRNA ligase alpha subunit (farsa) of Danio rerio (Zebrafish).